We begin with the raw amino-acid sequence, 474 residues long: 4-O-methyl-glucuronoyl methylesterase (474 aa).

A signal peptide spans 1-17 (MFKPSFVALALVSYATA). The 37-residue stretch at 19–55 (ASAPQWGQCGGIGWTGPTACPSGWACQQLNAYYSQCL) folds into the CBM1 domain. The tract at residues 61-91 (APARTTAAPPPPPATTAAPPPPTTSAPTGSS) is disordered. The span at 68–84 (APPPPPATTAAPPPPTT) shows a compositional bias: pro residues. Residue Asn120 is glycosylated (N-linked (GlcNAc...) asparagine). The GXSYXG catalytic site motif motif lies at 284 to 289 (GCSRDG). Disulfide bonds link Cys285-Cys421 and Cys317-Cys393. Ser286 functions as the Nucleophile in the catalytic mechanism. Substrate is bound by residues Lys290, Gln332, Glu340, and Trp384. His420 acts as the Proton donor/acceptor in catalysis.

The protein belongs to the carbohydrate esterase 15 (CE15) family. In terms of processing, N-glycosylated.

Its subcellular location is the secreted. The catalysed reaction is a 4-O-methyl-alpha-D-glucuronosyl ester derivative + H2O = 4-O-methyl-alpha-D-glucuronate derivative + an alcohol + H(+). Glucuronoyl esterase which may play a significant role in biomass degradation, as it is considered to disconnect hemicellulose from lignin through the hydrolysis of the ester bond between 4-O-methyl-D-glucuronic acid residues of glucuronoxylans and aromatic alcohols of lignin. This Cerrena unicolor (Canker rot fungus) protein is 4-O-methyl-glucuronoyl methylesterase.